The chain runs to 511 residues: Putative thymidine phosphorylase (511 aa).

This sequence belongs to the thymidine/pyrimidine-nucleoside phosphorylase family. Type 2 subfamily.

The catalysed reaction is thymidine + phosphate = 2-deoxy-alpha-D-ribose 1-phosphate + thymine. In Polaromonas sp. (strain JS666 / ATCC BAA-500), this protein is Putative thymidine phosphorylase.